Reading from the N-terminus, the 1653-residue chain is Ciliary rootlet coiled-coil protein 2 (1653 aa).

The span at 1–17 (MSSASSEPGNGDASQQP) shows a compositional bias: polar residues. Positions 1-57 (MSSASSEPGNGDASQQPLLGLDTVIQRLEDTILSPTASREDRALTVRGEGRQASPTP) are disordered. Over residues 38-50 (SREDRALTVRGEG) the composition is skewed to basic and acidic residues. Coiled-coil stretches lie at residues 86 to 145 (VARV…SELE) and 310 to 351 (KVAL…LVAQ). A disordered region spans residues 367–396 (LGEPRRPLRSPQRATSPHQGASPPHICSPA). The stretch at 423–1215 (LKSSQALVAS…QRKLAEVEAA (793 aa)) forms a coiled coil. The segment at 1302 to 1356 (GLQRQSPWASPEQPGSPTKGSDSSQALPGQQGTSPPARPHSPLRWPSPTPGGRSS) is disordered. Residues 1304–1335 (QRQSPWASPEQPGSPTKGSDSSQALPGQQGTS) are compositionally biased toward polar residues. Residues 1361 to 1570 (VATVQDILRD…QAQMTEMEQA (210 aa)) adopt a coiled-coil conformation.

Belongs to the rootletin family.

The protein is Ciliary rootlet coiled-coil protein 2 of Homo sapiens (Human).